The primary structure comprises 209 residues: Translation initiation factor IF-3 (209 aa).

It belongs to the IF-3 family. In terms of assembly, monomer.

Its subcellular location is the cytoplasm. Its function is as follows. IF-3 binds to the 30S ribosomal subunit and shifts the equilibrium between 70S ribosomes and their 50S and 30S subunits in favor of the free subunits, thus enhancing the availability of 30S subunits on which protein synthesis initiation begins. This Chlorobium phaeovibrioides (strain DSM 265 / 1930) (Prosthecochloris vibrioformis (strain DSM 265)) protein is Translation initiation factor IF-3.